The primary structure comprises 457 residues: Nuclear hormone receptor family member odr-7 (457 aa).

2 disordered regions span residues glutamate 57 to alanine 95 and lysine 230 to proline 252. Positions leucine 327 to histidine 407 form a DNA-binding region, nuclear receptor. NR C4-type zinc fingers lie at residues cysteine 330–cysteine 351 and cysteine 367–cysteine 395. Residues glutamine 435–asparagine 457 are disordered.

Belongs to the nuclear hormone receptor family. NR0 subfamily. In terms of assembly, heterodimer with a partner that confers DNA binding capacity or a nuclear hormone receptor whose DNA binding it inhibits. In terms of tissue distribution, expressed predominantly in the AWA neurons.

The protein resides in the nucleus. The protein localises to the cytoplasm. It is found in the perinuclear region. Required for the function of one pair of chemosensory neurons called AWA neurons that are involved in chemotaxis to volatile odorants. Acts in a pathway that specifies olfactory neuronal fate. Regulates the transcription of olfactory signaling molecules such as odr-10 that specify AWA neuron identity and function. Represses the expression in AWA neurons of factors such as str-2 which specify AWC neuron identity. The protein is Nuclear hormone receptor family member odr-7 (odr-7) of Caenorhabditis elegans.